We begin with the raw amino-acid sequence, 130 residues long: Iron-sulfur cluster insertion protein ErpA (130 aa).

Iron-sulfur cluster is bound by residues C46, C116, and C118.

This sequence belongs to the HesB/IscA family. In terms of assembly, homodimer. Iron-sulfur cluster serves as cofactor.

In terms of biological role, required for insertion of 4Fe-4S clusters for at least IspG. This is Iron-sulfur cluster insertion protein ErpA from Legionella pneumophila subsp. pneumophila (strain Philadelphia 1 / ATCC 33152 / DSM 7513).